The chain runs to 337 residues: Phenylalanine--tRNA ligase alpha subunit (337 aa).

Glu-252 lines the Mg(2+) pocket.

This sequence belongs to the class-II aminoacyl-tRNA synthetase family. Phe-tRNA synthetase alpha subunit type 1 subfamily. Tetramer of two alpha and two beta subunits. The cofactor is Mg(2+).

It is found in the cytoplasm. The catalysed reaction is tRNA(Phe) + L-phenylalanine + ATP = L-phenylalanyl-tRNA(Phe) + AMP + diphosphate + H(+). The protein is Phenylalanine--tRNA ligase alpha subunit of Cellvibrio japonicus (strain Ueda107) (Pseudomonas fluorescens subsp. cellulosa).